The sequence spans 352 residues: [Citrate [pro-3S]-lyase] ligase (352 aa).

Residues 1 to 128 (MFGNDIFTRV…VMVLMENSAT (128 aa)) enclose the N-acetyltransferase domain.

The catalysed reaction is holo-[citrate lyase ACP] + acetate + ATP = acetyl-[citrate lyase ACP] + AMP + diphosphate. Functionally, acetylation of prosthetic group (2-(5''-phosphoribosyl)-3'-dephosphocoenzyme-A) of the gamma subunit of citrate lyase. The protein is [Citrate [pro-3S]-lyase] ligase (citC) of Escherichia coli (strain K12).